The sequence spans 97 residues: Aspartyl/glutamyl-tRNA(Asn/Gln) amidotransferase subunit C (97 aa).

It belongs to the GatC family. In terms of assembly, heterotrimer of A, B and C subunits.

It carries out the reaction L-glutamyl-tRNA(Gln) + L-glutamine + ATP + H2O = L-glutaminyl-tRNA(Gln) + L-glutamate + ADP + phosphate + H(+). The enzyme catalyses L-aspartyl-tRNA(Asn) + L-glutamine + ATP + H2O = L-asparaginyl-tRNA(Asn) + L-glutamate + ADP + phosphate + 2 H(+). Its function is as follows. Allows the formation of correctly charged Asn-tRNA(Asn) or Gln-tRNA(Gln) through the transamidation of misacylated Asp-tRNA(Asn) or Glu-tRNA(Gln) in organisms which lack either or both of asparaginyl-tRNA or glutaminyl-tRNA synthetases. The reaction takes place in the presence of glutamine and ATP through an activated phospho-Asp-tRNA(Asn) or phospho-Glu-tRNA(Gln). The sequence is that of Aspartyl/glutamyl-tRNA(Asn/Gln) amidotransferase subunit C from Synechococcus sp. (strain CC9311).